We begin with the raw amino-acid sequence, 892 residues long: MTDLTLKALAAERQVSVDRLVQQFADAGIRKSADDSVSAQEKQTLLAHLNREAVSGPDKLTLQRKTRSTLNIPGTGGKSKSVQIEVRKKRTFVKRDPQEAERLAAEEQAQREAEEQARREAEEQAKREAQQKAEREAAEQAKREAAEKAKREAAEKDKVSNQQTDDMTKTAQAEKARRENEAAELKRKAEEEARRKLEEEARRVAEEARRMAEENKWTATPEPVEDTSDYHVTTSQHARQAEDENDREVEGGRGRGRNAKAARPAKKGKHAESKADREEARAAVRGGKGGKRKGSSLQQGFQKPAQAVNRDVVIGETITVGELANKMAVKGSQVIKAMMKLGAMVTINQVIDQETAQLVAEEMGHKVILRRENELEEAVMSDRDTGAAAEPRAPVVTIMGHVDHGKTSLLDYIRSTKVASGEAGGITQHIGAYHVETDNGMITFLDTPGHAAFTSMRARGAQATDIVVLVVAADDGVMPQTIEAIQHAKAAGVPVVVAVNKIDKPEADPDRVKNELSQYGILPEEWGGESQFVHVSAKAGTGIDELLDAILLQAEVLELKAVRKGMASGAVIESFLDKGRGPVATVLVREGTLHKGDIVLCGFEYGRVRAMRNELGQEVLEAGPSIPVEILGLSGVPAAGDEVTVVRDEKKAREVALYRQGKFREVKLARQQKSKLENMFANMTEGEVHEVNIVLKADVQGSVEAISDSLLKLSTDEVKVKIIGSGVGGITETDATLAAASNAILVGFNVRADASARKVIEFESLDLRYYSVIYNLIDEVKAAMSGMLSPELKQQIIGLAEVRDVFKSPKFGAIAGCMVTEGTIKRHNPIRVLRDNVVIYEGELESLRRFKDDVNEVRNGMECGIGVKNYNDVRVGDMIEVFEIIEIQRTIA.

Residues 88-305 (KKRTFVKRDP…SLQQGFQKPA (218 aa)) form a disordered region. Basic and acidic residues-rich tracts occupy residues 93–159 (VKRD…KDKV) and 166–216 (DMTK…EENK). Basic residues predominate over residues 254–269 (GRGRNAKAARPAKKGK). Residues 270–282 (HAESKADREEARA) show a composition bias toward basic and acidic residues. The region spanning 391-560 (PRAPVVTIMG…LLQAEVLELK (170 aa)) is the tr-type G domain. The G1 stretch occupies residues 400–407 (GHVDHGKT). 400–407 (GHVDHGKT) is a GTP binding site. A G2 region spans residues 425–429 (GITQH). The segment at 446 to 449 (DTPG) is G3. GTP-binding positions include 446–450 (DTPGH) and 500–503 (NKID). Residues 500–503 (NKID) are G4. The G5 stretch occupies residues 536-538 (SAK).

The protein belongs to the TRAFAC class translation factor GTPase superfamily. Classic translation factor GTPase family. IF-2 subfamily.

It is found in the cytoplasm. Its function is as follows. One of the essential components for the initiation of protein synthesis. Protects formylmethionyl-tRNA from spontaneous hydrolysis and promotes its binding to the 30S ribosomal subunits. Also involved in the hydrolysis of GTP during the formation of the 70S ribosomal complex. In Salmonella paratyphi A (strain ATCC 9150 / SARB42), this protein is Translation initiation factor IF-2.